Here is a 59-residue protein sequence, read N- to C-terminus: Large ribosomal subunit protein uL30 (59 aa).

Belongs to the universal ribosomal protein uL30 family. As to quaternary structure, part of the 50S ribosomal subunit.

The polypeptide is Large ribosomal subunit protein uL30 (Stutzerimonas stutzeri (strain A1501) (Pseudomonas stutzeri)).